Reading from the N-terminus, the 963-residue chain is Iron-responsive element-binding protein 2 (963 aa).

The [4Fe-4S] cluster site is built by cysteine 512, cysteine 578, and cysteine 581.

It belongs to the aconitase/IPM isomerase family. As to quaternary structure, interacts with RBCK1 isoform 1 and isoform 2 only in iron-rich conditions. Interacts (when associated with the 4Fe-4S) with FBXL5. Interacts with CIAO1 and CIAO2A. Requires [4Fe-4S] cluster as cofactor. Post-translationally, ubiquitinated and degraded by the proteasome in presence of high level of iron and oxygen. Ubiquitinated by a SCF complex containing FBXL5. Upon iron and oxygen depletion FBXL5 is degraded, preventing ubiquitination and allowing its RNA-binding activity.

It is found in the cytoplasm. In terms of biological role, RNA-binding protein that binds to iron-responsive elements (IRES), which are stem-loop structures found in the 5'-UTR of ferritin, and delta aminolevulinic acid synthase mRNAs, and in the 3'-UTR of transferrin receptor mRNA. Binding to the IRE element in ferritin results in the repression of its mRNA translation. Binding of the protein to the transferrin receptor mRNA inhibits the degradation of this otherwise rapidly degraded mRNA. The sequence is that of Iron-responsive element-binding protein 2 (IREB2) from Homo sapiens (Human).